Consider the following 202-residue polypeptide: MTPQLSSSVASKLVTLKLKPVVVFGPSGVGKSTLLKRLLKDHGDKLGFSVSHTTRTPRAGEKDGIDYHFVTKEEFQKLVAEEKFVEWAVFSGNMYGTSIMAIQELEAVNKKAILDIDLQGVLQVKASPIDAQYVFLAPPSIEQLEVRLRGRGTENESAILQRLERARAEIEYSEKPGNFDALIVNDDVEKAYKQLEAICLSD.

Residues 18–200 (LKPVVVFGPS…AYKQLEAICL (183 aa)) enclose the Guanylate kinase-like domain. 25-32 (GPSGVGKS) lines the ATP pocket.

Belongs to the guanylate kinase family.

The catalysed reaction is GMP + ATP = GDP + ADP. Its function is as follows. Essential for recycling GMP and indirectly, cGMP. This chain is Guanylate kinase, found in Schizosaccharomyces pombe (strain 972 / ATCC 24843) (Fission yeast).